The following is a 135-amino-acid chain: Ribonuclease P protein component (135 aa).

The protein belongs to the RnpA family. Consists of a catalytic RNA component (M1 or rnpB) and a protein subunit.

The enzyme catalyses Endonucleolytic cleavage of RNA, removing 5'-extranucleotides from tRNA precursor.. Its function is as follows. RNaseP catalyzes the removal of the 5'-leader sequence from pre-tRNA to produce the mature 5'-terminus. It can also cleave other RNA substrates such as 4.5S RNA. The protein component plays an auxiliary but essential role in vivo by binding to the 5'-leader sequence and broadening the substrate specificity of the ribozyme. The polypeptide is Ribonuclease P protein component (Saccharophagus degradans (strain 2-40 / ATCC 43961 / DSM 17024)).